The primary structure comprises 599 residues: Subtilisin-like protease 1 (599 aa).

Residues 1-20 (MRTVFIYACIISLVLRTIPA) form the signal peptide. The propeptide at 21–195 (HNDLMSKEKE…VESDELVGAD (175 aa)) is inhibition peptide. Asn57 is a glycosylation site (N-linked (GlcNAc...) asparagine). Residues 74–101 (EDAPKEELNKIEMEKKKAEEEAKNSKKK) adopt a coiled-coil conformation. Asn123, Thr126, Pro128, and Gly183 together coordinate Ca(2+). Residue Asn227 is glycosylated (N-linked (GlcNAc...) asparagine). Asp251 serves as a coordination point for Ca(2+). In terms of domain architecture, Peptidase S8 spans 257–574 (QWGLDLARLD…GGYIDILNAV (318 aa)). Cystine bridges form between Cys283–Cys393 and Cys372–Cys389. Asp286 acts as the Charge relay system in catalysis. Ca(2+) contacts are provided by Asp295, Glu306, Asp314, Asp315, Asp316, Asn318, Ile320, Asp322, and Asp323. A glycan (N-linked (GlcNAc...) asparagine) is linked at Asn331. The Charge relay system role is filled by His342. Ile353 provides a ligand contact to Ca(2+). Asn355 carries an N-linked (GlcNAc...) asparagine glycan. Positions 356, 358, and 360 each coordinate Ca(2+). N-linked (GlcNAc...) asparagine glycans are attached at residues Asn402 and Asn434. Cysteines 435 and 448 form a disulfide. Residue Ser519 is the Charge relay system of the active site.

It belongs to the peptidase S8 family. Post-translationally, the N-terminal prodomain is cleaved.

The protein localises to the secreted. It localises to the parasitophorous vacuole lumen. The protein resides in the cytoplasmic vesicle. It is found in the secretory vesicle. The catalysed reaction is Hydrolysis of proteins with broad specificity for peptide bonds, and a preference for a large uncharged residue in P1. Hydrolyzes peptide amides.. In terms of biological role, mediates the proteolytic maturation of serine protease SERA3. Mediates the proteolytic maturation of MSP1, and thereby may prime the parasite cell surface for invasion of fresh erythrocytes. Required for completion of the parasite pre-erythrocytic stages. Required for hepatic schizont development and merozoite formation. Required for the egress of the hepatic merozoites from the parasitophorous vacuole. Required for parasite infectivity during blood stages. Required for male gamete egress. This is Subtilisin-like protease 1 from Plasmodium berghei (strain Anka).